Here is a 226-residue protein sequence, read N- to C-terminus: Endonuclease V (226 aa).

Mg(2+) is bound by residues Asp43 and Asp108.

The protein belongs to the endonuclease V family. Mg(2+) serves as cofactor.

The protein resides in the cytoplasm. The enzyme catalyses Endonucleolytic cleavage at apurinic or apyrimidinic sites to products with a 5'-phosphate.. Its function is as follows. DNA repair enzyme involved in the repair of deaminated bases. Selectively cleaves double-stranded DNA at the second phosphodiester bond 3' to a deoxyinosine leaving behind the intact lesion on the nicked DNA. The sequence is that of Endonuclease V from Thermosipho melanesiensis (strain DSM 12029 / CIP 104789 / BI429).